A 296-amino-acid polypeptide reads, in one-letter code: Bifunctional protein FolD (296 aa).

Residues Gly-166–Ser-168, Ser-191, and Ile-232 contribute to the NADP(+) site.

This sequence belongs to the tetrahydrofolate dehydrogenase/cyclohydrolase family. Homodimer.

It catalyses the reaction (6R)-5,10-methylene-5,6,7,8-tetrahydrofolate + NADP(+) = (6R)-5,10-methenyltetrahydrofolate + NADPH. The catalysed reaction is (6R)-5,10-methenyltetrahydrofolate + H2O = (6R)-10-formyltetrahydrofolate + H(+). The protein operates within one-carbon metabolism; tetrahydrofolate interconversion. Functionally, catalyzes the oxidation of 5,10-methylenetetrahydrofolate to 5,10-methenyltetrahydrofolate and then the hydrolysis of 5,10-methenyltetrahydrofolate to 10-formyltetrahydrofolate. The protein is Bifunctional protein FolD of Cereibacter sphaeroides (strain ATCC 17023 / DSM 158 / JCM 6121 / CCUG 31486 / LMG 2827 / NBRC 12203 / NCIMB 8253 / ATH 2.4.1.) (Rhodobacter sphaeroides).